We begin with the raw amino-acid sequence, 1040 residues long: Chromatin modification-related protein rik1 (1040 aa).

Belongs to the DDB1 family. As to quaternary structure, component of the Clr4 methyltransferase complex (ClrC) composed of at least clr4, rik1, pcu4, rbx1, raf1 and raf2. The cullin pcu4, rik1, raf1, raf2 and the ring-box protein rbx1 are components of an E3 ubiquitin ligase, whose activity is essential for heterochromatin assembly.

It is found in the nucleus. The protein resides in the cytoplasm. Its subcellular location is the cytoskeleton. It localises to the microtubule organizing center. The protein localises to the spindle pole body. It is found in the chromosome. Its function is as follows. Component of the Clr4 methyltransferase complex (ClrC) which contributes to the establishment of heterochromatin by specifically methylating histone H3 to form H3K9me. ClrC preferentially ubiquitylates H3K14 and ClrC-mediated H3 ubiquitination promotes clr4 methyltransferase activity for the methylation of H3K9. H3K9me represents a specific tag for epigenetic transcriptional repression by recruiting swi6/HP1 to methylated histones which leads to transcriptional silencing within centromeric heterochromatin, telomeric regions and at the silent mating-type loci. Rik1 is involved in the RNAi-mediated targeting of ClrC to heterochromatic repeat elements. Rik1 also has a function in meiotic telomere clustering. The polypeptide is Chromatin modification-related protein rik1 (rik1) (Schizosaccharomyces pombe (strain 972 / ATCC 24843) (Fission yeast)).